We begin with the raw amino-acid sequence, 254 residues long: MLTIADVEFESRLFTGTGKFSNSQVMLEAITASKSQLVTVAMKRIDFKMGLDDLLTPLRQAGVRLLPNTSGARNAKEAVFAAELAREMLGTHWIKLEIHPDPKYLMPDAIETLEAARILCEKGFIVMPYVHADPVLCRRLEEVGCAAVMPLASPIGSNQGLVTESFLKIIIEQARVPVVIDAGIGAPSQAARAMELGADAVLVNTAIASSASPIVMAECFKEAVQCGRRAFEAGLGRVQTGAVHTSPLTGFLNQ.

The Schiff-base intermediate with DXP role is filled by lysine 95. 1-deoxy-D-xylulose 5-phosphate-binding positions include glycine 156, 182 to 183 (AG), and 204 to 205 (NT).

It belongs to the ThiG family. Homotetramer. Forms heterodimers with either ThiH or ThiS.

Its subcellular location is the cytoplasm. The enzyme catalyses [ThiS sulfur-carrier protein]-C-terminal-Gly-aminoethanethioate + 2-iminoacetate + 1-deoxy-D-xylulose 5-phosphate = [ThiS sulfur-carrier protein]-C-terminal Gly-Gly + 2-[(2R,5Z)-2-carboxy-4-methylthiazol-5(2H)-ylidene]ethyl phosphate + 2 H2O + H(+). The protein operates within cofactor biosynthesis; thiamine diphosphate biosynthesis. Its function is as follows. Catalyzes the rearrangement of 1-deoxy-D-xylulose 5-phosphate (DXP) to produce the thiazole phosphate moiety of thiamine. Sulfur is provided by the thiocarboxylate moiety of the carrier protein ThiS. In vitro, sulfur can be provided by H(2)S. This chain is Thiazole synthase, found in Shewanella baltica (strain OS195).